Here is a 155-residue protein sequence, read N- to C-terminus: Probable jacalin-related lectin 26 (155 aa).

The next 2 helical transmembrane spans lie at 26–48 (AYLY…IAMI) and 127–149 (VSFV…VLFL). The 109-residue stretch at 47 to 155 (MIRAGSVGKK…VLFLMKFKRS (109 aa)) folds into the Jacalin-type lectin domain.

The protein belongs to the jacalin lectin family.

The protein localises to the membrane. The sequence is that of Probable jacalin-related lectin 26 (JAL26) from Arabidopsis thaliana (Mouse-ear cress).